Here is a 697-residue protein sequence, read N- to C-terminus: Transmembrane protein 168 (697 aa).

The next 3 membrane-spanning stretches (helical) occupy residues Leu36–Trp56, Leu63–Tyr83, and Ala89–Leu109. Asn111 carries an N-linked (GlcNAc...) asparagine glycan. The next 5 helical transmembrane spans lie at Met172–Ile192, Phe199–Thr219, Pro223–Phe243, Leu265–Leu285, and Phe293–Leu313. Asn337 carries N-linked (GlcNAc...) asparagine glycosylation. 2 consecutive transmembrane segments (helical) span residues Phe352 to Ala372 and Gly380 to Phe400. Residues Asn533 and Asn598 are each glycosylated (N-linked (GlcNAc...) asparagine).

It belongs to the TMEM168 family.

The protein resides in the nucleus membrane. In terms of biological role, plays a key role in maintaining the cardiac electrical stability by modulating cell surface expression of SCN5A. Plays a role i the modulation of anxiety behavior by regulating GABAergic neuronal system in the nucleus accumbens. The sequence is that of Transmembrane protein 168 (Tmem168) from Mus musculus (Mouse).